Reading from the N-terminus, the 347-residue chain is Bombesin receptor-activated protein C6orf89 (347 aa).

Over 1–58 (MDLAANEISIYDKLSETVDLVRQTGHQCGMSEKAIEKFIRQLLEKNEPQRPPPQYPLL) the chain is Cytoplasmic. Residues 59–79 (IVVYKVLATLGLILLTAYFVI) form a helical membrane-spanning segment. Residues 80–347 (QPFSPLAPEP…ICDGTAFSEL (268 aa)) lie on the Extracellular side of the membrane.

Homodimer. Interacts with BRS3. Interacts (via N-terminus) with SIN3B. In terms of processing, glycosylated.

It is found in the golgi apparatus membrane. The protein localises to the midbody. Its subcellular location is the cytoplasm. It localises to the nucleus. The protein resides in the nucleolus. Its function is as follows. Exhibits histone deacetylase (HDAC) enhancer properties. May play a role in cell cycle progression and wound repair of bronchial epithelial cells. The polypeptide is Bombesin receptor-activated protein C6orf89 (C6orf89) (Homo sapiens (Human)).